The primary structure comprises 513 residues: Putative ribose/galactose/methyl galactoside import ATP-binding protein 2 (513 aa).

2 ABC transporter domains span residues 24–260 and 270–510; these read LAAD…VGRE and VPIG…VMDL. 56–63 lines the ATP pocket; the sequence is GENGAGKS.

It belongs to the ABC transporter superfamily. Carbohydrate importer 2 (CUT2) (TC 3.A.1.2) family.

The protein localises to the cell inner membrane. It catalyses the reaction D-ribose(out) + ATP + H2O = D-ribose(in) + ADP + phosphate + H(+). The enzyme catalyses D-galactose(out) + ATP + H2O = D-galactose(in) + ADP + phosphate + H(+). Functionally, part of an ABC transporter complex involved in carbohydrate import. Could be involved in ribose, galactose and/or methyl galactoside import. Responsible for energy coupling to the transport system. This Agrobacterium fabrum (strain C58 / ATCC 33970) (Agrobacterium tumefaciens (strain C58)) protein is Putative ribose/galactose/methyl galactoside import ATP-binding protein 2.